A 332-amino-acid polypeptide reads, in one-letter code: Serine, glycine, tyrosine and glutamine-rich protein (332 aa).

An N-terminal signal peptide occupies residues 1-17 (MMKTVLLLVVLVGVAYC). The disordered stretch occupies residues 39–81 (SSSSSSSSSSGGGGSSGGGASGGGGGGGSSGGGGASGGGGGGS). Residues 48-81 (SGGGGSSGGGASGGGGGGGSSGGGGASGGGGGGS) show a composition bias toward gly residues.

In terms of tissue distribution, prismatic layer of shell (at protein level). Expressed primarily in the mantle with highest level in the mantle edge and lower level in the mantle pallium.

It is found in the secreted. This Margaritifera margaritifera (Freshwater pearl mussel) protein is Serine, glycine, tyrosine and glutamine-rich protein.